The primary structure comprises 741 residues: DNA ligase (741 aa).

Residues 78–82 (DADYD), 127–128 (SL), and E161 contribute to the NAD(+) site. K163 acts as the N6-AMP-lysine intermediate in catalysis. R184, E219, K335, and K359 together coordinate NAD(+). Zn(2+) is bound by residues C464, C467, C482, and C488. In terms of domain architecture, BRCT spans 662–741 (VGDSPVAGKT…DAWRVLAGLA (80 aa)).

It belongs to the NAD-dependent DNA ligase family. LigA subfamily. Mg(2+) serves as cofactor. Requires Mn(2+) as cofactor.

The catalysed reaction is NAD(+) + (deoxyribonucleotide)n-3'-hydroxyl + 5'-phospho-(deoxyribonucleotide)m = (deoxyribonucleotide)n+m + AMP + beta-nicotinamide D-nucleotide.. DNA ligase that catalyzes the formation of phosphodiester linkages between 5'-phosphoryl and 3'-hydroxyl groups in double-stranded DNA using NAD as a coenzyme and as the energy source for the reaction. It is essential for DNA replication and repair of damaged DNA. This chain is DNA ligase, found in Dinoroseobacter shibae (strain DSM 16493 / NCIMB 14021 / DFL 12).